A 142-amino-acid chain; its full sequence is Large ribosomal subunit protein bL17 (142 aa).

Belongs to the bacterial ribosomal protein bL17 family. In terms of assembly, part of the 50S ribosomal subunit. Contacts protein L32.

The protein is Large ribosomal subunit protein bL17 of Brucella abortus (strain S19).